A 160-amino-acid polypeptide reads, in one-letter code: Ribosomal RNA large subunit methyltransferase H (160 aa).

Residues L76, G108, and 127–132 (LGKMTW) each bind S-adenosyl-L-methionine.

It belongs to the RNA methyltransferase RlmH family. As to quaternary structure, homodimer.

It localises to the cytoplasm. The catalysed reaction is pseudouridine(1915) in 23S rRNA + S-adenosyl-L-methionine = N(3)-methylpseudouridine(1915) in 23S rRNA + S-adenosyl-L-homocysteine + H(+). Specifically methylates the pseudouridine at position 1915 (m3Psi1915) in 23S rRNA. The polypeptide is Ribosomal RNA large subunit methyltransferase H (Rhizobium leguminosarum bv. trifolii (strain WSM2304)).